A 380-amino-acid polypeptide reads, in one-letter code: MSKKEIIAMILAGGQGSRLGILTRRTAKPAVPFGGKYRIIDFTLSNCSNSGIDTVGVLTQYKPLALNSHIGIGSPWDLDRTSGGVSVLPPYMKETGGNWYKGTANAIYQNRHFIENYDPEYVVILSGDHIYKMNYLEMLDFHKKKNADATIAVFEVPLNEASRFGIMNTDEDDRINEFEEKPKKPKNNLASMGIYIFNWRFLKRFLEEDARDESSNNDFGKNIIPNMLNKKRKLYAYRFNGYWKDVGTIQSLWEANMDLLDDNNSLNIYDPKWKIYSVNPTMPPQYIACNSDVKRSLVVEGCIVLGKVYNSVLFPGVYIGRDTIITNSVIMPNVIVGNNVIIKKSIIGSNARVDDNVIVGTNDNISVVGAGSKVKESIIQ.

Alpha-D-glucose 1-phosphate contacts are provided by residues Tyr100, Gly165, 180–181, and Ser191; that span reads EK.

It belongs to the bacterial/plant glucose-1-phosphate adenylyltransferase family. Homotetramer.

The enzyme catalyses alpha-D-glucose 1-phosphate + ATP + H(+) = ADP-alpha-D-glucose + diphosphate. The protein operates within glycan biosynthesis; glycogen biosynthesis. Involved in the biosynthesis of ADP-glucose, a building block required for the elongation reactions to produce glycogen. Catalyzes the reaction between ATP and alpha-D-glucose 1-phosphate (G1P) to produce pyrophosphate and ADP-Glc. In Clostridium acetobutylicum (strain ATCC 824 / DSM 792 / JCM 1419 / IAM 19013 / LMG 5710 / NBRC 13948 / NRRL B-527 / VKM B-1787 / 2291 / W), this protein is Glucose-1-phosphate adenylyltransferase.